Reading from the N-terminus, the 309-residue chain is Probable sugar phosphate/phosphate translocator At5g05820 (309 aa).

The next 10 helical transmembrane spans lie at 9–29 (FFTI…LLLN), 42–62 (IFLT…AIAW), 77–97 (FFKI…GNIS), 100–120 (FLPV…TAVF), 130–150 (AWLT…ASGG), 154–174 (FHLF…LKSV), 192–212 (LLLY…LIME), 229–249 (IVWY…TNFL), 256–278 (ALTL…ILIF), and 282–301 (VSVT…ILYS). The 118-residue stretch at 30-147 (KYLLSNYGFK…VPVVTGVVIA (118 aa)) folds into the EamA domain.

Belongs to the TPT transporter family. TPT (TC 2.A.7.9) subfamily.

The protein resides in the membrane. This Arabidopsis thaliana (Mouse-ear cress) protein is Probable sugar phosphate/phosphate translocator At5g05820.